The primary structure comprises 428 residues: Flotillin-2 (428 aa).

Gly2 carries the N-myristoyl glycine lipid modification. Cys4 carries the S-palmitoyl cysteine; by ZDHHC5 lipid modification. A lipid anchor (S-palmitoyl cysteine) is attached at Cys19. Residue Cys20 is the site of S-palmitoyl cysteine; by ZDHHC5 attachment. Ser405 bears the Phosphoserine mark.

The protein belongs to the band 7/mec-2 family. Flotillin subfamily. Heterooligomeric complex of flotillin-1 and flotillin-2 and caveolin-1 and caveolin-2. Interacts with ECPAS. ZDHHC5-catalyzed palmitoylation predominantly occurs at Cys-4. ZDHHC5-catalyzed palmitoylation may be required for the formation of higher-order complexes and for neurite outgrowth in cultured neural stem cells. In terms of tissue distribution, in skin, expressed in epidermis and epidermal appendages but not in dermis. Expressed in all layers of the epidermis except the basal layer. In hair follicles, expressed in the suprabasal layer but not the basal layer. Also expressed in melanoma and carcinoma cell lines, fibroblasts and foreskin melanocytes.

Its subcellular location is the cell membrane. The protein resides in the membrane. It is found in the caveola. The protein localises to the endosome. May act as a scaffolding protein within caveolar membranes, functionally participating in formation of caveolae or caveolae-like vesicles. May be involved in epidermal cell adhesion and epidermal structure and function. The chain is Flotillin-2 (FLOT2) from Homo sapiens (Human).